The primary structure comprises 110 residues: Putative membrane protein insertion efficiency factor (110 aa).

It belongs to the UPF0161 family.

The protein resides in the cell inner membrane. Functionally, could be involved in insertion of integral membrane proteins into the membrane. In Aliarcobacter butzleri (strain RM4018) (Arcobacter butzleri), this protein is Putative membrane protein insertion efficiency factor.